The following is a 126-amino-acid chain: Protein ApaG (126 aa).

Residues 2-126 (SDPRYQIDVS…FRLAVPGALH (125 aa)) form the ApaG domain.

The sequence is that of Protein ApaG from Azotobacter vinelandii (strain DJ / ATCC BAA-1303).